The following is a 380-amino-acid chain: RNA-binding motif protein, Y chromosome (380 aa).

Residues 8–86 enclose the RRM domain; that stretch reads GKIFIGGLNI…KRIKVKQARR (79 aa). 2 disordered regions span residues 82–226 and 279–358; these read KQAR…STSR and HEAP…YSAS. Over residues 166-178 the composition is skewed to polar residues; it reads RSATSAQTRSNTG. Basic and acidic residues-rich tracts occupy residues 180–190 and 333–351; these read RGREPHRREIS and IDRE…HSPK.

Interacts with SRSF3/SRP20, SRSF9/SRP30, SRSF5/SRP40, and SRSF6/SRP55; this interaction inhibits SRSF family member pre-mRNA splicing. Interacts with splicing factor proteins and KHDRBS3. In terms of tissue distribution, testis-specific.

It is found in the nucleus. In terms of biological role, RNA-binding protein involved in pre-mRNA splicing. Required for sperm development. Acts additively with TRA2B to promote exon 7 inclusion of the survival motor neuron SMN. Binds non-specifically to mRNAs. This is RNA-binding motif protein, Y chromosome from Mus musculus (Mouse).